We begin with the raw amino-acid sequence, 350 residues long: Probable V-type proton ATPase subunit d 2 (350 aa).

Belongs to the V-ATPase V0D/AC39 subunit family. In terms of assembly, V-ATPase is a heteromultimeric enzyme made up of two complexes: the ATP-hydrolytic V1 complex and the proton translocation V0 complex. The V1 complex consists of three catalytic AB heterodimers that form a heterohexamer, three peripheral stalks each consisting of EG heterodimers, one central rotor including subunits D and F, and the regulatory subunits C and H. The proton translocation complex V0 consists of the proton transport subunit a, a ring of proteolipid subunits c9c'', rotary subunit d, subunits e and f, and the accessory subunits VhaAC45 and ATP6AP2.

Functionally, subunit of the V0 complex of vacuolar(H+)-ATPase (V-ATPase), a multisubunit enzyme composed of a peripheral complex (V1) that hydrolyzes ATP and a membrane integral complex (V0) that translocates protons. V-ATPase is responsible for acidifying and maintaining the pH of intracellular compartments and in some cell types, is targeted to the plasma membrane, where it is responsible for acidifying the extracellular environment. May play a role in coupling of proton transport and ATP hydrolysis. This chain is Probable V-type proton ATPase subunit d 2 (VhaAC39-2), found in Drosophila melanogaster (Fruit fly).